The chain runs to 685 residues: Dammaradiene synthase (685 aa).

PFTB repeat units lie at residues 82 to 123 (MDKM…RLLN) and 265 to 308 (IREA…DPVV). Residue aspartate 400 is the Proton donor of the active site. 2 PFTB repeats span residues 424–465 (ITRC…KAMV) and 621–672 (IGHG…ARYR).

Belongs to the terpene cyclase/mutase family.

The enzyme catalyses squalene = dammara-20,24-diene. In terms of biological role, squalene cyclase producing the tetracyclic triterpene dammaradiene. The protein is Dammaradiene synthase (DCD) of Dryopteris crassirhizoma (Thick stemmed wood fern).